Here is a 175-residue protein sequence, read N- to C-terminus: Cytidylate kinase (175 aa).

7–15 lines the ATP pocket; it reads GQPGSGKTS.

This sequence belongs to the cytidylate kinase family. Type 2 subfamily.

The protein resides in the cytoplasm. The enzyme catalyses CMP + ATP = CDP + ADP. It carries out the reaction dCMP + ATP = dCDP + ADP. The chain is Cytidylate kinase from Methanocella arvoryzae (strain DSM 22066 / NBRC 105507 / MRE50).